We begin with the raw amino-acid sequence, 565 residues long: Probable protease Gilli_2517 (565 aa).

In terms of biological role, probably a dedicated protease for substrate gasdermin bGSDM; cleaves the bGSDM precursor, releasing the pore-forming moiety, which integrates into the membrane and triggers cell death. Involved in defense against bacteriophages. Expression of bGSDM and this neighboring protease is not toxic in E.coli. This Gillisia limnaea (strain DSM 15749 / LMG 21470 / R-8282) protein is Probable protease Gilli_2517.